The chain runs to 494 residues: Tripartite motif-containing protein 5 (494 aa).

Alanine 2 bears the N-acetylalanine mark. Residues 15 to 59 (CPICLELLTEPLSLDCGHSFCQACITANHKESTLHQGERSCPLCR) form an RING-type zinc finger. At serine 86 the chain carries Phosphoserine. Residues 91–132 (QKVDHCARHGEKLLLFCQQDGNVICWLCERSQEHRGHHTFLV) form a B box-type zinc finger. Zn(2+)-binding residues include cysteine 96, histidine 99, cysteine 118, and histidine 124. A coiled-coil region spans residues 132–223 (VEEVAEKYQG…RLVQSESDMV (92 aa)). The segment at 186–199 (FKQLRDILDCEESK) is required for interaction with GABARAP and for autophagy. Positions 280 to 494 (PDLKGMLQAF…LPMTLCSPSS (215 aa)) constitute a B30.2/SPRY domain.

This sequence belongs to the TRIM/RBCC family. In terms of assembly, can form homodimers and homotrimers. In addition to lower-order dimerization, also exhibits a higher-order multimerization and both low- and high-order multimerizations are essential for its restriction activity. Interacts with BTBD1 and BTBD2. Interacts with PSMC4, PSMC5, PSMD7 and HSPA8/HSC70. Interacts (via B30.2/SPRY domain) with HSPA1A/B. Interacts with PSMC2, MAP3K7/TAK1, TAB2 and TAB3. Interacts with SQSTM1. Interacts with TRIM6 and TRIM34. Interacts with ULK1 (phosphorylated form), GABARAP, GABARAPL1, GABARAPL2, MAP1LC3A, MAP1LC3C and BECN1. In terms of processing, degraded in a proteasome-independent fashion in the absence of viral infection but in a proteasome-dependent fashion following exposure to restriction sensitive virus. Autoubiquitinated in a RING finger- and UBE2D2-dependent manner. Monoubiquitinated by TRIM21. Deubiquitinated by Yersinia YopJ. Ubiquitination may not lead to proteasomal degradation.

The protein resides in the cytoplasm. The protein localises to the nucleus. It carries out the reaction S-ubiquitinyl-[E2 ubiquitin-conjugating enzyme]-L-cysteine + [acceptor protein]-L-lysine = [E2 ubiquitin-conjugating enzyme]-L-cysteine + N(6)-ubiquitinyl-[acceptor protein]-L-lysine.. Its pathway is protein modification; protein ubiquitination. Functionally, capsid-specific restriction factor that prevents infection from non-host-adapted retroviruses. Blocks viral replication early in the life cycle, after viral entry but before reverse transcription. In addition to acting as a capsid-specific restriction factor, also acts as a pattern recognition receptor that activates innate immune signaling in response to the retroviral capsid lattice. Binding to the viral capsid triggers its E3 ubiquitin ligase activity, and in concert with the heterodimeric ubiquitin conjugating enzyme complex UBE2V1-UBE2N (also known as UBC13-UEV1A complex) generates 'Lys-63'-linked polyubiquitin chains, which in turn are catalysts in the autophosphorylation of the MAP3K7/TAK1 complex (includes TAK1, TAB2, and TAB3). Activation of the MAP3K7/TAK1 complex by autophosphorylation results in the induction and expression of NF-kappa-B and MAPK-responsive inflammatory genes, thereby leading to an innate immune response in the infected cell. Plays a role in regulating autophagy through activation of autophagy regulator BECN1 by causing its dissociation from its inhibitors BCL2 and TAB2. This chain is Tripartite motif-containing protein 5 (TRIM5), found in Cebuella pygmaea (Pygmy marmoset).